The chain runs to 436 residues: UPF0597 protein YhaM (436 aa).

This sequence belongs to the UPF0597 family.

The chain is UPF0597 protein YhaM from Salmonella newport (strain SL254).